Here is a 504-residue protein sequence, read N- to C-terminus: Maturase K (504 aa).

It belongs to the intron maturase 2 family. MatK subfamily.

The protein resides in the plastid. Its subcellular location is the chloroplast. Functionally, usually encoded in the trnK tRNA gene intron. Probably assists in splicing its own and other chloroplast group II introns. This is Maturase K from Actinidia chinensis (Kiwi).